The primary structure comprises 406 residues: Histidine--tRNA ligase (406 aa).

Belongs to the class-II aminoacyl-tRNA synthetase family. In terms of assembly, homodimer.

The protein localises to the cytoplasm. The enzyme catalyses tRNA(His) + L-histidine + ATP = L-histidyl-tRNA(His) + AMP + diphosphate + H(+). This is Histidine--tRNA ligase from Nitratiruptor sp. (strain SB155-2).